Here is a 237-residue protein sequence, read N- to C-terminus: tRNA1(Val) (adenine(37)-N6)-methyltransferase (237 aa).

This sequence belongs to the methyltransferase superfamily. tRNA (adenine-N(6)-)-methyltransferase family.

The protein localises to the cytoplasm. It catalyses the reaction adenosine(37) in tRNA1(Val) + S-adenosyl-L-methionine = N(6)-methyladenosine(37) in tRNA1(Val) + S-adenosyl-L-homocysteine + H(+). Its function is as follows. Specifically methylates the adenine in position 37 of tRNA(1)(Val) (anticodon cmo5UAC). This Bacteroides thetaiotaomicron (strain ATCC 29148 / DSM 2079 / JCM 5827 / CCUG 10774 / NCTC 10582 / VPI-5482 / E50) protein is tRNA1(Val) (adenine(37)-N6)-methyltransferase.